Here is a 109-residue protein sequence, read N- to C-terminus: Large ribosomal subunit protein uL22 (109 aa).

The protein belongs to the universal ribosomal protein uL22 family. Part of the 50S ribosomal subunit.

Its function is as follows. This protein binds specifically to 23S rRNA; its binding is stimulated by other ribosomal proteins, e.g. L4, L17, and L20. It is important during the early stages of 50S assembly. It makes multiple contacts with different domains of the 23S rRNA in the assembled 50S subunit and ribosome. Functionally, the globular domain of the protein is located near the polypeptide exit tunnel on the outside of the subunit, while an extended beta-hairpin is found that lines the wall of the exit tunnel in the center of the 70S ribosome. The sequence is that of Large ribosomal subunit protein uL22 from Dehalococcoides mccartyi (strain ATCC BAA-2100 / JCM 16839 / KCTC 5957 / BAV1).